The following is a 402-amino-acid chain: Zinc finger protein 586 (402 aa).

Residues 15–87 (VTFEDVAVNF…DQGGHSGERP (73 aa)) enclose the KRAB domain. Residues 88 to 116 (YECGEYRKLFKNKSCLTEPRRDHKHRNVR) form a C2H2-type 1; degenerate zinc finger. Residues 122–144 (YECSKYGKLFHQKPTLHIHERFH) form a C2H2-type 2; degenerate zinc finger. A C2H2-type 3; degenerate zinc finger spans residues 150–172 (YECSECGKSFHQSSSLLQRQTLH). C2H2-type zinc fingers lie at residues 178 to 200 (YECI…RKVH), 206 to 228 (YECN…RRIH), 234 to 256 (YECS…LRVH), 262 to 284 (YECV…QRVH), 290 to 312 (YECS…QRVH), 317 to 339 (HECG…LRVH), 345 to 367 (YECS…LRVH), and 373 to 395 (YECI…QRVH).

The protein belongs to the krueppel C2H2-type zinc-finger protein family.

The protein localises to the nucleus. Functionally, may be involved in transcriptional regulation. This chain is Zinc finger protein 586 (ZNF586), found in Homo sapiens (Human).